Consider the following 70-residue polypeptide: Sec-independent protein translocase protein TatA (70 aa).

The chain crosses the membrane as a helical span at residues methionine 1 to glycine 21. The tract at residues lysine 45–glycine 70 is disordered.

This sequence belongs to the TatA/E family. The Tat system comprises two distinct complexes: a TatABC complex, containing multiple copies of TatA, TatB and TatC subunits, and a separate TatA complex, containing only TatA subunits. Substrates initially bind to the TatABC complex, which probably triggers association of the separate TatA complex to form the active translocon.

It is found in the cell inner membrane. Functionally, part of the twin-arginine translocation (Tat) system that transports large folded proteins containing a characteristic twin-arginine motif in their signal peptide across membranes. TatA could form the protein-conducting channel of the Tat system. In Phenylobacterium zucineum (strain HLK1), this protein is Sec-independent protein translocase protein TatA.